The following is a 146-amino-acid chain: Hemoglobin subunit beta-1 (146 aa).

Positions 2–146 (GLTAHDRQLI…IADALGKGYH (145 aa)) constitute a Globin domain. Heme b contacts are provided by His-63 and His-92.

This sequence belongs to the globin family. As to quaternary structure, heterotetramer of two alpha chains and two beta chains. In terms of tissue distribution, red blood cells.

In terms of biological role, involved in oxygen transport from the lung to the various peripheral tissues. The sequence is that of Hemoglobin subunit beta-1 (hbb1) from Xenopus laevis (African clawed frog).